An 891-amino-acid chain; its full sequence is MAPTQDPNSVGGGAKKDEATLKVPSKDPKKKDEKKDEDLSEEDLELKQNLELYVERVQDPNPELQKAALESMRQEIRASTSSMTSVPKPLKFLRPHYGTLKAFHETMADSDLKKYLSDILSVLALTMSADGERESLRFRLIGTEGDIGSWGHEYVRNLAGEIAQEYTKRQSEEASIDDLMELVQQIVAFHMKHNAETEAVDLLMDVEDLDLLLEHVDKTNFKRTCNYLTSAARYLPGPDDMLVLDISYMIYMKFEEYPNALQIALFLDNTQYVKQVFTSCTDLLKKKQFCYMIARHGITFELDDEMVADDDDREALQDIVNNTKLSEGYLTLARDIEVMEAKTPEDIYKAHLLDGRASSGASVDSARQNLAATFVNAFVNAGFGQDKLMTVPSDSTTGSSGNWLFKNKEHGKTSAAASLGMIQLWDVDSGLSQLDKYFHSNDNPIIAGALLGVGIVNCGIKNDCDPALALLGDYIDKEDSSVRIGAIMGLGISYAGSQNDQIRNKLSPILNDAKAPLDVIAFASLSLGMIYVGSCNEEVAQSIIFALMDRSEAELGDALTRFLPLGLGLLYLGKQESVEATAEVSKTFNEKIRKYCDMTLLSCAYAGTGNVLKVQDLLAQCGEHLEKGDIHQGPAVLGLAMVAMSEELGVDMEIRSLERMLQYGEQNIRRAVPLALGLLCISNPKVTVMDTLSRLSHDTDSEVAMSAIISLGLIGAGTNNARIAGMLRNLSSYYYKDMSLLFCVRIAQGLVHMGKGLLTLSPFHSERFLLSPTALAGIVTLLHACLDMKPIILGKYHYVLYFLVLAMQPRMMLTVDENLKPLSVPVRVGQAVDVVGQAGRPKTITGFQTHSTPVLLAAGERAELATDKYIPLSPILEGFIILKENPDYREE.

The tract at residues 1 to 44 (MAPTQDPNSVGGGAKKDEATLKVPSKDPKKKDEKKDEDLSEEDL) is disordered. Positions 14–21 (AKKDEATL) match the Nuclear localization signal motif. Positions 14 to 37 (AKKDEATLKVPSKDPKKKDEKKDE) are enriched in basic and acidic residues. A Glycyl lysine isopeptide (Lys-Gly) (interchain with G-Cter in ubiquitin) cross-link involves residue K218. The residue at position 219 (T219) is an O-acetylthreonine. 7 PC repeats span residues 414-447 (SAAASLGMIQLWDVDSGLSQLDKYFHSNDNPIIA), 448-484 (GALLGVGIVNCGIKNDCDPALALLGDYIDKEDSSVRI), 485-519 (GAIMGLGISYAGSQNDQIRNKLSPILNDAKAPLDV), 522-556 (FASLSLGMIYVGSCNEEVAQSIIFALMDRSEAELG), 565-594 (LGLGLLYLGKQESVEATAEVSKTFNEKIRK), 674-705 (LALGLLCISNPKVTVMDTLSRLSHDTDSEVAM), and 724-739 (AGMLRNLSSYYYKDMS).

Belongs to the proteasome subunit S2 family. In terms of assembly, component of the 19S regulatory particle (RP/PA700) base subcomplex of the 26S proteasome. The 26S proteasome is composed of a core protease (CP), known as the 20S proteasome, capped at one or both ends by the 19S regulatory particle (RP/PA700). The RP/PA700 complex is composed of at least 17 different subunits in two subcomplexes, the base and the lid, which form the portions proximal and distal to the 20S proteolytic core, respectively. Interacts with JMJ27. Expressed in stems, leaves, buds, flowers, siliques and developing seeds.

Its subcellular location is the nucleus. The protein resides in the cytoplasm. Its function is as follows. Acts as a regulatory subunit of the 26 proteasome which is involved in the ATP-dependent degradation of ubiquitinated proteins. Required during embryogenesis. Required for optimal plant growth and stress responses. Required for innate immunity. Prevents JMJ27 accumulation in non-drought conditions. In Arabidopsis thaliana (Mouse-ear cress), this protein is 26S proteasome non-ATPase regulatory subunit 2 homolog A.